Here is a 284-residue protein sequence, read N- to C-terminus: BES1/BZR1 homolog protein 3 (284 aa).

Disordered stretches follow at residues 1–21 (MTSG…RRER) and 85–116 (GSTS…PSPT). Residues 6–88 (RTPTWKEREN…RMDLMNGSTS (83 aa)) form a required for DNA-binding region. The segment covering 85 to 97 (GSTSASPCSSYQH) has biased composition (polar residues). Residues 98–114 (SPRASYNPSPSSSSFPS) show a composition bias toward low complexity. Phosphothreonine is present on threonine 153.

This sequence belongs to the BZR/LAT61 family. Phosphorylated. Phosphorylation increases protein degradation.

In Arabidopsis thaliana (Mouse-ear cress), this protein is BES1/BZR1 homolog protein 3 (BEH3).